The primary structure comprises 1011 residues: Collagen alpha-2(I) chain (1011 aa).

The disordered stretch occupies residues 1-1011 (SGGFDFSFLP…FGYEGDFYRA (1011 aa)). A 4-hydroxyproline mark is found at Pro-10, Pro-13, Pro-35, and Pro-41. Low complexity predominate over residues 28–67 (LMGPRGPPGASGAPGPQGFQGPAGEPGEPGQTGPAGARGP). At Lys-106 the chain carries 5-hydroxylysine; alternate. A glycan (O-linked (Gal...) hydroxylysine; alternate) is linked at Lys-106. Positions 167-182 (SVGPVGPAGPIGSAGP) are enriched in low complexity. Residues 282 to 291 (GESGGKGEPG) are compositionally biased toward gly residues. Low complexity predominate over residues 292 to 302 (SAGPQGPPGSS). Residues 323-332 (GLRGGPGSRG) show a composition bias toward gly residues. Over residues 345-361 (PAGARGASGPAGVRGPS) the composition is skewed to low complexity. 2 positions are modified to 4-hydroxyproline: Pro-367 and Pro-370. Low complexity predominate over residues 396–415 (LPGIDGRPGPIGPAGARGEA). The segment covering 464-473 (GVQGGKGEQG) has biased composition (gly residues). Low complexity-rich tracts occupy residues 520 to 537 (PGES…SRGP) and 549 to 559 (EPGVVGAPGTA). Positions 560-578 (GPAGSGGPGERGAAGIPGG) are enriched in gly residues. Composition is skewed to low complexity over residues 588 to 635 (RGEV…PRGS) and 642 to 662 (VGPA…QPGA). Basic and acidic residues predominate over residues 663-672 (KGERGTKGPK). Positions 680–690 (PTGPVGSAGPA) are enriched in low complexity. A compositionally biased stretch (gly residues) spans 700 to 709 (GSRGDGGPPG). Positions 711–720 (TGFPGAAGRT) are enriched in low complexity. Residues 757–766 (GETGAGGPPG) are compositionally biased toward gly residues. Composition is skewed to low complexity over residues 774–801 (SGEP…LGLP) and 809–819 (LPGVAGAVGEP). Over residues 820-834 (GPLGIGPPGARGDGL) the composition is skewed to gly residues. 2 stretches are compositionally biased toward low complexity: residues 843-856 (YAGN…AGAP) and 872-887 (EPGP…ALGP). Basic and acidic residues predominate over residues 897–908 (RGDKGEPGEKGP). Residues 981–993 (SGPPGPPGPPGPP) are compositionally biased toward pro residues.

This sequence belongs to the fibrillar collagen family. In terms of assembly, trimers of one alpha 2(I) and two alpha 1(I) chains. Interacts (via C-terminus) with TMEM131 (via PapD-L domain); the interaction is direct and is involved in assembly and TRAPPIII ER-to-Golgi transport complex-dependent secretion of collagen. In terms of processing, prolines at the third position of the tripeptide repeating unit (G-X-Y) are hydroxylated in some or all of the chains. In terms of tissue distribution, expressed in bones.

The protein localises to the secreted. It is found in the extracellular space. It localises to the extracellular matrix. In terms of biological role, type I collagen is a member of group I collagen (fibrillar forming collagen). The polypeptide is Collagen alpha-2(I) chain (Neocnus comes (Miller's Hispaniolan ground sloth)).